A 168-amino-acid polypeptide reads, in one-letter code: Photosystem I assembly protein Ycf3 (168 aa).

3 TPR repeats span residues 35–68 (AFTY…EIDP), 72–105 (SYIL…NPFL), and 120–153 (GEQA…TPGN).

This sequence belongs to the Ycf3 family.

It is found in the plastid. The protein resides in the chloroplast thylakoid membrane. In terms of biological role, essential for the assembly of the photosystem I (PSI) complex. May act as a chaperone-like factor to guide the assembly of the PSI subunits. The polypeptide is Photosystem I assembly protein Ycf3 (Nandina domestica (Heavenly bamboo)).